The chain runs to 115 residues: Large ribosomal subunit protein bL19 (115 aa).

This sequence belongs to the bacterial ribosomal protein bL19 family.

Functionally, this protein is located at the 30S-50S ribosomal subunit interface and may play a role in the structure and function of the aminoacyl-tRNA binding site. In Sodalis glossinidius (strain morsitans), this protein is Large ribosomal subunit protein bL19.